The primary structure comprises 546 residues: Chaperonin GroEL (546 aa).

Residues 30–33 (TLGP), Lys51, 87–91 (DGTTT), Gly415, 479–481 (NAA), and Asp495 contribute to the ATP site. The disordered stretch occupies residues 525 to 546 (PEPKKDMPPMPGGGMGGMGGMY). The segment covering 536–546 (GGGMGGMGGMY) has biased composition (gly residues).

This sequence belongs to the chaperonin (HSP60) family. Forms a cylinder of 14 subunits composed of two heptameric rings stacked back-to-back. Interacts with the co-chaperonin GroES.

It is found in the cytoplasm. The enzyme catalyses ATP + H2O + a folded polypeptide = ADP + phosphate + an unfolded polypeptide.. Functionally, together with its co-chaperonin GroES, plays an essential role in assisting protein folding. The GroEL-GroES system forms a nano-cage that allows encapsulation of the non-native substrate proteins and provides a physical environment optimized to promote and accelerate protein folding. This Solidesulfovibrio magneticus (strain ATCC 700980 / DSM 13731 / RS-1) (Desulfovibrio magneticus) protein is Chaperonin GroEL.